Consider the following 309-residue polypeptide: Interferon-inducible double-stranded RNA-dependent protein kinase activator A homolog A (309 aa).

A disordered region spans residues 1 to 22 (MSQERFPAAPKMSSEKPTSLDA). DRBM domains lie at 31–98 (TPIQ…ILRG), 123–191 (NPVG…KFKT), and 236–304 (DYVK…YLKI).

The protein belongs to the PRKRA family. In terms of assembly, homodimer. Interacts with dicer1 and eif2ak2/pkr. Also able to interact with dsRNA.

The protein localises to the cytoplasm. Its subcellular location is the perinuclear region. The protein resides in the nucleus. Its function is as follows. Activates eif2ak2/pkr in the absence of double-stranded RNA (dsRNA), leading to phosphorylation of eif2s1/efi2-alpha and inhibition of translation and induction of apoptosis. Required for siRNA production by dicer1 and for subsequent siRNA-mediated post-transcriptional gene silencing. Does not seem to be required for processing of pre-miRNA to miRNA by dicer1. This is Interferon-inducible double-stranded RNA-dependent protein kinase activator A homolog A (prkra-a) from Xenopus laevis (African clawed frog).